Reading from the N-terminus, the 136-residue chain is MNSQIKNKAVYWGTGRRKTSVARVRLIPGNGLIKINGRSGDDYLNFNPLHLNSIKAPLQTLGLENSYDILVNVFGGGLTGQADAIKQGAARALCELSPDNRKPLKTEGHLSRDPRAKERRKYGLKKARKAPQFSKR.

The segment at 97–136 is disordered; the sequence is SPDNRKPLKTEGHLSRDPRAKERRKYGLKKARKAPQFSKR. Residues 98–116 show a composition bias toward basic and acidic residues; sequence PDNRKPLKTEGHLSRDPRA. Positions 117–136 are enriched in basic residues; the sequence is KERRKYGLKKARKAPQFSKR.

This sequence belongs to the universal ribosomal protein uS9 family.

The protein is Small ribosomal subunit protein uS9 of Prochlorococcus marinus (strain AS9601).